We begin with the raw amino-acid sequence, 406 residues long: UPF0754 membrane protein SYNPCC7002_A1087 (406 aa).

The chain crosses the membrane as a helical span at residues 384–404; it reads IVNLGGVLGFLVGVAQSVILL.

Belongs to the UPF0754 family.

The protein resides in the cell inner membrane. The polypeptide is UPF0754 membrane protein SYNPCC7002_A1087 (Picosynechococcus sp. (strain ATCC 27264 / PCC 7002 / PR-6) (Agmenellum quadruplicatum)).